The chain runs to 328 residues: Ketol-acid reductoisomerase (NADP(+)) (328 aa).

Residues 2-182 (AKIYRDVDAS…GATRAGVIET (181 aa)) form the KARI N-terminal Rossmann domain. Residues 25–28 (YGIQ), arginine 48, serine 53, and 83–86 (DMEQ) contribute to the NADP(+) site. Residue histidine 108 is part of the active site. Residue glycine 134 coordinates NADP(+). The 146-residue stretch at 183–328 (TFAEETETDL…IEMRRLLFGQ (146 aa)) folds into the KARI C-terminal knotted domain. Residues aspartate 191, glutamate 195, glutamate 227, and glutamate 231 each coordinate Mg(2+). A substrate-binding site is contributed by serine 252.

The protein belongs to the ketol-acid reductoisomerase family. The cofactor is Mg(2+).

The enzyme catalyses (2R)-2,3-dihydroxy-3-methylbutanoate + NADP(+) = (2S)-2-acetolactate + NADPH + H(+). It catalyses the reaction (2R,3R)-2,3-dihydroxy-3-methylpentanoate + NADP(+) = (S)-2-ethyl-2-hydroxy-3-oxobutanoate + NADPH + H(+). Its pathway is amino-acid biosynthesis; L-isoleucine biosynthesis; L-isoleucine from 2-oxobutanoate: step 2/4. The protein operates within amino-acid biosynthesis; L-valine biosynthesis; L-valine from pyruvate: step 2/4. In terms of biological role, involved in the biosynthesis of branched-chain amino acids (BCAA). Catalyzes an alkyl-migration followed by a ketol-acid reduction of (S)-2-acetolactate (S2AL) to yield (R)-2,3-dihydroxy-isovalerate. In the isomerase reaction, S2AL is rearranged via a Mg-dependent methyl migration to produce 3-hydroxy-3-methyl-2-ketobutyrate (HMKB). In the reductase reaction, this 2-ketoacid undergoes a metal-dependent reduction by NADPH to yield (R)-2,3-dihydroxy-isovalerate. This chain is Ketol-acid reductoisomerase (NADP(+)), found in Pyrobaculum arsenaticum (strain DSM 13514 / JCM 11321 / PZ6).